The sequence spans 500 residues: ATP synthase subunit alpha (500 aa).

Residue 169 to 176 (GDRQTGKT) coordinates ATP.

This sequence belongs to the ATPase alpha/beta chains family. F-type ATPases have 2 components, CF(1) - the catalytic core - and CF(0) - the membrane proton channel. CF(1) has five subunits: alpha(3), beta(3), gamma(1), delta(1), epsilon(1). CF(0) has three main subunits: a(1), b(2) and c(9-12). The alpha and beta chains form an alternating ring which encloses part of the gamma chain. CF(1) is attached to CF(0) by a central stalk formed by the gamma and epsilon chains, while a peripheral stalk is formed by the delta and b chains.

The protein resides in the cell membrane. It carries out the reaction ATP + H2O + 4 H(+)(in) = ADP + phosphate + 5 H(+)(out). Its function is as follows. Produces ATP from ADP in the presence of a proton gradient across the membrane. The alpha chain is a regulatory subunit. In Clostridioides difficile (strain 630) (Peptoclostridium difficile), this protein is ATP synthase subunit alpha.